A 32-amino-acid chain; its full sequence is U6-ctenitoxin-Pr1a (32 aa).

3 cysteine pairs are disulfide-bonded: Cys3–Cys17, Cys10–Cys21, and Cys16–Cys30.

In terms of tissue distribution, expressed by the venom gland.

The protein localises to the secreted. In Phoneutria reidyi (Brazilian Amazonian armed spider), this protein is U6-ctenitoxin-Pr1a.